Reading from the N-terminus, the 570-residue chain is Urease subunit alpha (570 aa).

In terms of domain architecture, Urease spans 131-570; sequence GGFDSHIHFI…LPMAQRYFMY (440 aa). 3 residues coordinate Ni(2+): His-136, His-138, and Lys-219. Residue Lys-219 is modified to N6-carboxylysine. Position 221 (His-221) interacts with substrate. Residues His-248 and His-274 each contribute to the Ni(2+) site. His-322 serves as the catalytic Proton donor. A Ni(2+)-binding site is contributed by Asp-362.

It belongs to the metallo-dependent hydrolases superfamily. Urease alpha subunit family. In terms of assembly, heterotrimer of UreA (gamma), UreB (beta) and UreC (alpha) subunits. Three heterotrimers associate to form the active enzyme. Ni cation serves as cofactor. Carboxylation allows a single lysine to coordinate two nickel ions.

It localises to the cytoplasm. The enzyme catalyses urea + 2 H2O + H(+) = hydrogencarbonate + 2 NH4(+). Its pathway is nitrogen metabolism; urea degradation; CO(2) and NH(3) from urea (urease route): step 1/1. The chain is Urease subunit alpha from Rhodopseudomonas palustris (strain HaA2).